We begin with the raw amino-acid sequence, 201 residues long: Recombination protein RecR (201 aa).

The C4-type zinc finger occupies 60-75 (CETCGNIDTRSPCTIC). The region spanning 83–178 (SIIVVVADVA…KVTRLAHGVP (96 aa)) is the Toprim domain.

The protein belongs to the RecR family.

Its function is as follows. May play a role in DNA repair. It seems to be involved in an RecBC-independent recombinational process of DNA repair. It may act with RecF and RecO. The protein is Recombination protein RecR of Nitrobacter winogradskyi (strain ATCC 25391 / DSM 10237 / CIP 104748 / NCIMB 11846 / Nb-255).